Consider the following 285-residue polypeptide: UDP-3-O-acyl-N-acetylglucosamine deacetylase (285 aa).

Histidine 89, histidine 243, and aspartate 247 together coordinate Zn(2+). The active-site Proton donor is histidine 270.

Belongs to the LpxC family. Zn(2+) is required as a cofactor.

The enzyme catalyses a UDP-3-O-[(3R)-3-hydroxyacyl]-N-acetyl-alpha-D-glucosamine + H2O = a UDP-3-O-[(3R)-3-hydroxyacyl]-alpha-D-glucosamine + acetate. Its pathway is glycolipid biosynthesis; lipid IV(A) biosynthesis; lipid IV(A) from (3R)-3-hydroxytetradecanoyl-[acyl-carrier-protein] and UDP-N-acetyl-alpha-D-glucosamine: step 2/6. Catalyzes the hydrolysis of UDP-3-O-myristoyl-N-acetylglucosamine to form UDP-3-O-myristoylglucosamine and acetate, the committed step in lipid A biosynthesis. The protein is UDP-3-O-acyl-N-acetylglucosamine deacetylase of Thermosynechococcus vestitus (strain NIES-2133 / IAM M-273 / BP-1).